Reading from the N-terminus, the 336-residue chain is Glycerol-3-phosphate dehydrogenase [NAD(P)+] (336 aa).

The NADPH site is built by Ser11, Trp12, Arg32, and Lys106. Sn-glycerol 3-phosphate contacts are provided by Lys106 and Gly136. Position 140 (Ala140) interacts with NADPH. The sn-glycerol 3-phosphate site is built by Lys191, Asp244, Ser254, Arg255, and Asn256. Catalysis depends on Lys191, which acts as the Proton acceptor. Residue Arg255 coordinates NADPH. Residues Val279 and Glu281 each contribute to the NADPH site.

This sequence belongs to the NAD-dependent glycerol-3-phosphate dehydrogenase family.

It localises to the cytoplasm. The catalysed reaction is sn-glycerol 3-phosphate + NAD(+) = dihydroxyacetone phosphate + NADH + H(+). It catalyses the reaction sn-glycerol 3-phosphate + NADP(+) = dihydroxyacetone phosphate + NADPH + H(+). It participates in membrane lipid metabolism; glycerophospholipid metabolism. Its function is as follows. Catalyzes the reduction of the glycolytic intermediate dihydroxyacetone phosphate (DHAP) to sn-glycerol 3-phosphate (G3P), the key precursor for phospholipid synthesis. In Frankia casuarinae (strain DSM 45818 / CECT 9043 / HFP020203 / CcI3), this protein is Glycerol-3-phosphate dehydrogenase [NAD(P)+].